The following is a 322-amino-acid chain: Probable transcription factor KAN3 (322 aa).

The tract at residues 1–35 is disordered; it reads MELFPSQPDLYLKISRRREEEQEKESQELQEQEVE. Over residues 17–35 the composition is skewed to basic and acidic residues; that stretch reads RREEEQEKESQELQEQEVE. The HTH myb-type domain maps to 161–221; that stretch reads GVRAPRMRWT…HLQMYRTIKS (61 aa). The segment at residues 192-217 is a DNA-binding region (H-T-H motif); it reads PKSVLELMDVQDLTLAHVKSHLQMYR. Disordered regions lie at residues 222–244 and 267–322; these read TEKP…NSER and KASS…NLSP. Composition is skewed to polar residues over residues 224 to 241 and 299 to 322; these read KPTT…SQVN and LTGT…NLSP.

In terms of tissue distribution, expressed in developing phloem.

Its subcellular location is the nucleus. Probable transcription factor that regulates lateral organ polarity. Plays a role in lateral root formation and development. In Arabidopsis thaliana (Mouse-ear cress), this protein is Probable transcription factor KAN3 (KAN3).